The chain runs to 346 residues: Tyrosine--tRNA ligase (346 aa).

Position 35 (Tyr35) interacts with L-tyrosine. Residues 40–48 (PTGEMHIGH) carry the 'HIGH' region motif. L-tyrosine is bound by residues Tyr162, Gln166, Asp169, and Gln184.

This sequence belongs to the class-I aminoacyl-tRNA synthetase family. TyrS type 3 subfamily. In terms of assembly, homodimer.

It is found in the cytoplasm. The catalysed reaction is tRNA(Tyr) + L-tyrosine + ATP = L-tyrosyl-tRNA(Tyr) + AMP + diphosphate + H(+). Catalyzes the attachment of tyrosine to tRNA(Tyr) in a two-step reaction: tyrosine is first activated by ATP to form Tyr-AMP and then transferred to the acceptor end of tRNA(Tyr). The chain is Tyrosine--tRNA ligase from Haloarcula marismortui (strain ATCC 43049 / DSM 3752 / JCM 8966 / VKM B-1809) (Halobacterium marismortui).